The chain runs to 195 residues: Imidazoleglycerol-phosphate dehydratase (195 aa).

Belongs to the imidazoleglycerol-phosphate dehydratase family.

The protein resides in the cytoplasm. It catalyses the reaction D-erythro-1-(imidazol-4-yl)glycerol 3-phosphate = 3-(imidazol-4-yl)-2-oxopropyl phosphate + H2O. The protein operates within amino-acid biosynthesis; L-histidine biosynthesis; L-histidine from 5-phospho-alpha-D-ribose 1-diphosphate: step 6/9. The sequence is that of Imidazoleglycerol-phosphate dehydratase from Paracoccus denitrificans (strain Pd 1222).